A 1712-amino-acid polypeptide reads, in one-letter code: MGQTITTPLSLTLDHWSEVRARAHNQGVEVRKKKWITLCEAEWVMMNVGWPREGTFSLDNISQVEKKIFAPGPYGHPDQVPYITTWRSLATDPPSWVRPFLPPPKPPTPLPQPLSPQPSAPLTSSLYPVLPKSDPPKPPVLPPDPSSPLIDLLTEEPPPYPGGHGPPPSGPRTPTASPIASRLRERRENPAEESQALPLREGPNNRPQYWPFSASDLYNWKSHNPPFSQDPVALTNLIESILVTHQPTWDDCQQLLQALLTGEERQRVLLEARKQVPGEDGRPTQLPNVIDETFPLTRPNWDFATPAGREHLRLYRQLLLAGLRGAARRPTNLAQVKQVVQGKEETPAAFLERLKEAYRMYTPYDPEDPGQAASVILSFIYQSSPDIRNKLQRLEGLQGFTLSDLLKEAEKIYNKRETPEEREERLWQRQEERDKKRHKEMTKVLATVVAQNRDKDREESKLGDQRKIPLGKDQCAYCKEKGHWVRDCPKRPRKKPANSTLLNLGDQESQGQDPPPEPRITLKIGGQPVTFLVDTGAQHSVLTRPDGPLSDRTALVQGATGSKNYRWTTDRRVQLATGKVTHSFLYVPECPYPLLGRDLLTKLKAQIHFTGEGANVVGPKGLPLQVLTLQLEEEYRLFEPESTQKQEMDIWLKNFPQAWAETGGMGTAHCQAPVLIQLKATATPISIRQYPMPHEAYQGIKPHIRRMLDQGILKPCQSPWNTPLLPVKKPGTEDYRPVQDLREVNKRVEDIHPTVPNPYNLLSTLPPSHPWYTVLDLKDAFFCLRLHSESQLLFAFEWRDPEIGLSGQLTWTRLPQGFKNSPTLFDEALHSDLADFRVRYPALVLLQYVDDLLLAAATRTECLEGTKALLETLGNKGYRASAKKAQICLQEVTYLGYSLKDGQRWLTKARKEAILSIPVPKNSRQVREFLGTAGYCRLWIPGFAELAAPLYPLTRPGTLFQWGTEQQLAFEDIKKALLSSPALGLPDITKPFELFIDENSGFAKGVLVQKLGPWKRPVAYLSKKLDTVASGWPPCLRMVAAIAILVKDAGKLTLGQPLTILTSHPVEALVRQPPNKWLSNARMTHYQAMLLDAERVHFGPTVSLNPATLLPLPSGGNHHDCLQILAETHGTRPDLTDQPLPDADLTWYTDGSSFIRNGEREAGAAVTTESEVIWAAPLPPGTSAQRAELIALTQALKMAEGKKLTVYTDSRYAFATTHVHGEIYRRRGLLTSEGKEIKNKNEILALLEALFLPKRLSIIHCPGHQKGDSPQAKGNRLADDTAKKAATETHSSLTVLPTELIEGPKRPPWEYDDSDLDLVQKLEAHYEPKRGTWEYRGKTIMPEKYAKELISHLHKLTHLSARKMKTLLEREETGFYLPNRDLHLRQVTESCRACAQINAGKIKFGPDVRARGRRPGTHWEVDFTEIKPGMYGYKYLLVFIDTFSGWAEAYPAKHETAKVVAKKLLEEIFPRYGIPQVLGSDNGPAFISQVSQSVATLLGINWKLHCAYRPQSSGQVERMNRSIKETLTKLTLETGSKDWVLLLPLVLYRVRNTPGPHGLTPFEILYGAPPPMAHFFDTDISSFATSPTMQAHLRALQLVQEEIQRPLAAAYREKLETPVVPHPFKPGDSVWVRRHQTKNLEPRWKGPHIVLLTTPTALKVDGVAAWIHASHVKAAGPTTNQDLSDSPSSDDPSRWKVQRTQNPLKIRLSRGT.

G2 is lipidated: N-myristoyl glycine; by host. Disordered stretches follow at residues 97-208 (VRPF…NRPQ), 416-440 (RETPEEREERLWQRQEERDKKRHKE), and 487-518 (DCPKRPRKKPANSTLLNLGDQESQGQDPPPEP). Residues 100–119 (FLPPPKPPTPLPQPLSPQPS) show a composition bias toward pro residues. Residues 107–110 (PTPL) carry the PTAP/PSAP motif motif. Residues 120–132 (APLTSSLYPVLPK) are compositionally biased toward low complexity. Residues 126-130 (LYPVL) carry the LYPX(n)L motif motif. Composition is skewed to pro residues over residues 136–146 (PKPPVLPPDPS) and 156–171 (EPPPYPGGHGPPPSGP). Residues 157–160 (PPPY) carry the PPXY motif motif. Positions 416–434 (RETPEEREERLWQRQEERD) are enriched in basic and acidic residues. Residues 473 to 490 (DQCAYCKEKGHWVRDCPK) form a CCHC-type zinc finger. Over residues 497-512 (ANSTLLNLGDQESQGQ) the composition is skewed to polar residues. The region spanning 529–599 (VTFLVDTGAQ…CPYPLLGRDL (71 aa)) is the Peptidase A2 domain. Catalysis depends on D534, which acts as the Protease; shared with dimeric partner. A Reverse transcriptase domain is found at 708–899 (LDQGILKPCQ…QEVTYLGYSL (192 aa)). Residues D776, D850, D851, D1150, E1188, D1209, and D1279 each contribute to the Mg(2+) site. One can recognise an RNase H type-1 domain in the interval 1141–1287 (PDADLTWYTD…ADDTAKKAAT (147 aa)). Residues 1262–1289 (PGHQKGDSPQAKGNRLADDTAKKAATET) form a disordered region. Residues 1276–1287 (RLADDTAKKAAT) are compositionally biased toward basic and acidic residues. Residues 1354–1394 (HKLTHLSARKMKTLLEREETGFYLPNRDLHLRQVTESCRAC) form an HHCC-type zinc finger. Residues 1411–1569 (RGRRPGTHWE…TPFEILYGAP (159 aa)) form the Integrase catalytic domain. D1422 and D1481 together coordinate Mg(2+). The segment at 1676-1703 (GPTTNQDLSDSPSSDDPSRWKVQRTQNP) is disordered.

Belongs to the retroviral Pol polyprotein family. In terms of assembly, homohexamer; further associates as homomultimer. The virus core is composed of a lattice formed from hexagonal rings, each containing six capsid monomers. As to quaternary structure, interacts (via PPXY motif) with host NEDD4. Interacts (via PSAP motif) with host TSG101. Interacts (via LYPX(n)L motif) with host PDCD6IP. The reverse transcriptase is a monomer (Potential). Interacts (via RNase domains) with host release factor ETF1; this interaction is essential for translational readthrough of amber codon between viral gag and pol genes, as well as for viral replication. In terms of assembly, homodimer. The cofactor is Mg(2+). Post-translationally, specific enzymatic cleavages by the viral protease yield mature proteins. The protease is released by autocatalytic cleavage. The polyprotein is cleaved during and after budding, this process is termed maturation. Phosphorylated on serine residues.

The protein localises to the virion. It localises to the host cell membrane. Its subcellular location is the host late endosome membrane. It is found in the host endosome. The protein resides in the host multivesicular body. The protein localises to the host cytoplasm. The enzyme catalyses DNA(n) + a 2'-deoxyribonucleoside 5'-triphosphate = DNA(n+1) + diphosphate. It catalyses the reaction Endonucleolytic cleavage to 5'-phosphomonoester.. With respect to regulation, most efficiently inhibited by Amprenavir, which is able to block Gag-Pol processing in infected cells. Plays a role in budding and is processed by the viral protease during virion maturation outside the cell. During budding, it recruits, in a PPXY-dependent or independent manner, Nedd4-like ubiquitin ligases that conjugate ubiquitin molecules to Gag-Pol, or to Gag-Pol binding host factors. Interaction with HECT ubiquitin ligases probably links the viral protein to the host ESCRT pathway and facilitates release. Functionally, targets Gag and gag-pol polyproteins to the plasma membrane via a multipartite membrane binding signal, that includes its myristoylated N-terminus. Also mediates nuclear localization of the pre-integration complex. Its function is as follows. Constituent of the pre-integration complex (PIC) which tethers the latter to mitotic chromosomes. This allows the integration of the viral genome into the host DNA. In terms of biological role, forms the spherical core of the virion that encapsulates the genomic RNA-nucleocapsid complex. Involved in the packaging and encapsidation of two copies of the genome. Binds with high affinity to conserved UCUG elements within the packaging signal, located near the 5'-end of the genome. This binding is dependent on genome dimerization. Acts as a nucleic acid chaperone which is involved in rearrangement of nucleic acid secondary structures during gRNA retrotranscription. Functionally, the aspartyl protease mediates proteolytic cleavages of Gag and Gag-Pol polyproteins during or shortly after the release of the virion from the plasma membrane. Cleavages take place as an ordered, step-wise cascade to yield mature proteins. This process is called maturation. Displays maximal activity during the budding process just prior to particle release from the cell. Its function is as follows. RT is a multifunctional enzyme that converts the viral dimeric RNA genome into dsDNA in the cytoplasm, shortly after virus entry into the cell. This enzyme displays a DNA polymerase activity that can copy either DNA or RNA templates, and a ribonuclease H (RNase H) activity that cleaves the RNA strand of RNA-DNA heteroduplexes in a partially processive 3' to 5' endonucleasic mode. Conversion of viral genomic RNA into dsDNA requires many steps. A tRNA binds to the primer-binding site (PBS) situated at the 5' end of the viral RNA. RT uses the 3' end of the tRNA primer to perform a short round of RNA-dependent minus-strand DNA synthesis. The reading proceeds through the U5 region and ends after the repeated (R) region which is present at both ends of viral RNA. The portion of the RNA-DNA heteroduplex is digested by the RNase H, resulting in a ssDNA product attached to the tRNA primer. This ssDNA/tRNA hybridizes with the identical R region situated at the 3' end of viral RNA. This template exchange, known as minus-strand DNA strong stop transfer, can be either intra- or intermolecular. RT uses the 3' end of this newly synthesized short ssDNA to perform the RNA-dependent minus-strand DNA synthesis of the whole template. RNase H digests the RNA template except for a polypurine tract (PPT) situated at the 5' end of the genome. It is not clear if both polymerase and RNase H activities are simultaneous. RNase H probably can proceed both in a polymerase-dependent (RNA cut into small fragments by the same RT performing DNA synthesis) and a polymerase-independent mode (cleavage of remaining RNA fragments by free RTs). Secondly, RT performs DNA-directed plus-strand DNA synthesis using the PPT that has not been removed by RNase H as primers. PPT and tRNA primers are then removed by RNase H. The 3' and 5' ssDNA PBS regions hybridize to form a circular dsDNA intermediate. Strand displacement synthesis by RT to the PBS and PPT ends produces a blunt ended, linear dsDNA copy of the viral genome that includes long terminal repeats (LTRs) at both ends. In terms of biological role, catalyzes viral DNA integration into the host chromosome, by performing a series of DNA cutting and joining reactions. This enzyme activity takes place after virion entry into a cell and reverse transcription of the RNA genome in dsDNA. The first step in the integration process is 3' processing. This step requires a complex comprising the viral genome, matrix protein and integrase. This complex is called the pre-integration complex (PIC). The integrase protein removes 2 nucleotides from each 3' end of the viral DNA, leaving recessed CA OH's at the 3' ends. In the second step that requires cell division, the PIC enters cell nucleus. In the third step, termed strand transfer, the integrase protein joins the previously processed 3' ends to the 5' ends of strands of target cellular DNA at the site of integration. The last step is viral DNA integration into host chromosome. In Feline leukemia virus, this protein is Gag-Pol polyprotein (pol).